The primary structure comprises 481 residues: RuvB-like helicase 2 (481 aa).

76-83 (GPPSTGKT) contributes to the ATP binding site.

The protein belongs to the RuvB family. In terms of assembly, may form heterododecamers with hel-1/rvb1. Component of the SWR1 chromatin remodeling complex, the INO80 chromatin remodeling complex, and of the R2TP complex.

It is found in the nucleus. It carries out the reaction ATP + H2O = ADP + phosphate + H(+). In terms of biological role, DNA helicase which participates in several chromatin remodeling complexes, including the SWR1 and the INO80 complexes. The SWR1 complex mediates the ATP-dependent exchange of histone H2A for the H2A variant H2A.Z leading to transcriptional regulation of selected genes by chromatin remodeling. The INO80 complex remodels chromatin by shifting nucleosomes and is involved in DNA repair. Also involved in pre-rRNA processing. The protein is RuvB-like helicase 2 (hel-2) of Neurospora crassa (strain ATCC 24698 / 74-OR23-1A / CBS 708.71 / DSM 1257 / FGSC 987).